The chain runs to 133 residues: Small ribosomal subunit protein uS11 (133 aa).

Belongs to the universal ribosomal protein uS11 family. In terms of assembly, part of the 30S ribosomal subunit. Interacts with proteins S7 and S18. Binds to IF-3.

Located on the platform of the 30S subunit, it bridges several disparate RNA helices of the 16S rRNA. Forms part of the Shine-Dalgarno cleft in the 70S ribosome. The sequence is that of Small ribosomal subunit protein uS11 from Cupriavidus metallidurans (strain ATCC 43123 / DSM 2839 / NBRC 102507 / CH34) (Ralstonia metallidurans).